A 559-amino-acid chain; its full sequence is DnaJ homolog subfamily C member 11 (559 aa).

Alanine 2 bears the N-acetylalanine mark. A J domain is found at 14 to 82 (DYYSLLNVRR…QTRAIYDIYG (69 aa)). Serine 204 carries the phosphoserine modification. A coiled-coil region spans residues 415-457 (QKEKELEKQRENTASDILQKKQEAEAAVRLMQESVRRIIEAEE).

The protein belongs to the DNAJC11 family. Associates with the mitochondrial contact site and cristae organizing system (MICOS) complex, composed of at least MICOS10/MIC10, CHCHD3/MIC19, CHCHD6/MIC25, APOOL/MIC27, IMMT/MIC60, APOO/MIC23/MIC26 and QIL1/MIC13. This complex was also known under the names MINOS or MitOS complex. The MICOS complex associates with mitochondrial outer membrane proteins SAMM50, MTX1 and MTX2 (together described as components of the mitochondrial outer membrane sorting assembly machinery (SAM) complex) and DNAJC11, mitochondrial inner membrane protein TMEM11 and with HSPA9. The MICOS and SAM complexes together with DNAJC11 are part of a large protein complex spanning both membranes termed the mitochondrial intermembrane space bridging (MIB) complex.

Its subcellular location is the mitochondrion. The protein resides in the mitochondrion outer membrane. Functionally, required for mitochondrial inner membrane organization. Seems to function through its association with the MICOS complex and the mitochondrial outer membrane sorting assembly machinery (SAM) complex. This is DnaJ homolog subfamily C member 11 (Dnajc11) from Mus musculus (Mouse).